Here is a 180-residue protein sequence, read N- to C-terminus: Cytochrome b6-f complex iron-sulfur subunit (180 aa).

A helical membrane pass occupies residues 21–43 (LLTFGTITGTALGALYPVVKYFI). Positions 66 to 162 (VSEYLAKHLP…ATVTEDDKLV (97 aa)) constitute a Rieske domain. [2Fe-2S] cluster is bound by residues Cys-108, His-110, Cys-126, and His-129. Cysteines 113 and 128 form a disulfide.

This sequence belongs to the Rieske iron-sulfur protein family. In terms of assembly, the 4 large subunits of the cytochrome b6-f complex are cytochrome b6, subunit IV (17 kDa polypeptide, PetD), cytochrome f and the Rieske protein, while the 4 small subunits are PetG, PetL, PetM and PetN. The complex functions as a dimer. [2Fe-2S] cluster serves as cofactor.

The protein resides in the cellular thylakoid membrane. The catalysed reaction is 2 oxidized [plastocyanin] + a plastoquinol + 2 H(+)(in) = 2 reduced [plastocyanin] + a plastoquinone + 4 H(+)(out). Component of the cytochrome b6-f complex, which mediates electron transfer between photosystem II (PSII) and photosystem I (PSI), cyclic electron flow around PSI, and state transitions. This is Cytochrome b6-f complex iron-sulfur subunit from Thermosynechococcus vestitus (strain NIES-2133 / IAM M-273 / BP-1).